A 572-amino-acid polypeptide reads, in one-letter code: Neuronal acetylcholine receptor subunit alpha-9-I (572 aa).

Residues 1 to 19 form the signal peptide; it reads MKTVVLLTWISCWIDVCTS. Topologically, residues 20-232 are extracellular; it reads AQGRYAQKLL…YTLHLKRRSL (213 aa). An N-linked (GlcNAc...) asparagine glycan is attached at N51. The cysteines at positions 149 and 163 are disulfide-linked. N164 carries N-linked (GlcNAc...) asparagine glycosylation. A disulfide bridge connects residues C213 and C214. 3 helical membrane passes run 233–253, 263–283, and 297–317; these read FYIF…PLGF, VSLG…VAES, and YIAT…IMNI. Residues 318–550 are Cytoplasmic-facing; it reads HFCGAEAKPV…WKKVAKVMDR (233 aa). The interval 405–458 is disordered; the sequence is GHLQNHHSTHQNHLDNCRYANGGHRDDHYSNRSNQNHHSNRSQTSKGEGGEEKR. Residues 435–447 are compositionally biased toward low complexity; that stretch reads NRSNQNHHSNRSQ. A helical transmembrane segment spans residues 551–571; that stretch reads FFMWIFFIMVFLMSILIIGKA.

It belongs to the ligand-gated ion channel (TC 1.A.9) family. Acetylcholine receptor (TC 1.A.9.1) subfamily. As to expression, expressed in the liver, olfactory mucosa, pituitary gland, hair cells of the saccule and spleen.

The protein resides in the postsynaptic cell membrane. The protein localises to the cell membrane. This Oncorhynchus mykiss (Rainbow trout) protein is Neuronal acetylcholine receptor subunit alpha-9-I (nachra9).